Reading from the N-terminus, the 124-residue chain is Fluoride-specific ion channel FluC (124 aa).

The next 4 membrane-spanning stretches (helical) occupy residues 5–25 (VYIALLGALGCLCRYFLSGFV), 32–52 (SFPYGTLAVNLIGAFLIGLIM), 67–87 (FAITIGFLGGLTTFSTFSFET), and 96–116 (LLIAIVNVLVSVVACLTCTWI). Gly75 and Thr78 together coordinate Na(+).

This sequence belongs to the fluoride channel Fluc/FEX (TC 1.A.43) family.

Its subcellular location is the cell inner membrane. It catalyses the reaction fluoride(in) = fluoride(out). Na(+) is not transported, but it plays an essential structural role and its presence is essential for fluoride channel function. Fluoride-specific ion channel. Important for reducing fluoride concentration in the cell, thus reducing its toxicity. The chain is Fluoride-specific ion channel FluC from Citrifermentans bemidjiense (strain ATCC BAA-1014 / DSM 16622 / JCM 12645 / Bem) (Geobacter bemidjiensis).